We begin with the raw amino-acid sequence, 148 residues long: Ribonuclease H (148 aa).

The 141-residue stretch at M1–K141 folds into the RNase H type-1 domain. Positions 9, 47, 69, and 133 each coordinate Mg(2+).

The protein belongs to the RNase H family. As to quaternary structure, monomer. Mg(2+) is required as a cofactor.

It is found in the cytoplasm. It carries out the reaction Endonucleolytic cleavage to 5'-phosphomonoester.. Its function is as follows. Endonuclease that specifically degrades the RNA of RNA-DNA hybrids. In Hahella chejuensis (strain KCTC 2396), this protein is Ribonuclease H.